We begin with the raw amino-acid sequence, 695 residues long: Polyribonucleotide nucleotidyltransferase (695 aa).

Mg(2+) is bound by residues Asp-488 and Asp-494. Positions 554–613 constitute a KH domain; the sequence is PKTTIIKIKTDKIRDLIGRGGETIKGIISTSCASIDVDDSGNVNIFSNNQKSFDTAVQMV. Positions 623-690 constitute an S1 motif domain; that stretch reads NKVYTGKVVK…DRGRIKLSRK (68 aa).

It belongs to the polyribonucleotide nucleotidyltransferase family. In terms of assembly, component of the RNA degradosome, which is a multiprotein complex involved in RNA processing and mRNA degradation. The cofactor is Mg(2+).

Its subcellular location is the cytoplasm. The enzyme catalyses RNA(n+1) + phosphate = RNA(n) + a ribonucleoside 5'-diphosphate. Its function is as follows. Involved in mRNA degradation. Catalyzes the phosphorolysis of single-stranded polyribonucleotides processively in the 3'- to 5'-direction. The protein is Polyribonucleotide nucleotidyltransferase of Vesicomyosocius okutanii subsp. Calyptogena okutanii (strain HA).